Reading from the N-terminus, the 104-residue chain is Secretoglobin family 3A member 1 (104 aa).

The signal sequence occupies residues 1–20; it reads MKLAALLGLCVALSCSSAAA.

Belongs to the secretoglobin family. UGRP subfamily. As to quaternary structure, homodimer; disulfide-linked. In terms of tissue distribution, highly expressed in lung and prostate. Also found in mammary gland, spleen, pancreas, testis and liver. Detected throughout the airway epithelium in lung, with highest expression in large airways. Found in lung submucosal glands where it localizes to acinar and ductile cells. Not detected in respiratory bronchioles, alveolar ducts or alveolar epithelium. In mammary gland, specifically localizes to luminal epithelial cells.

The protein resides in the secreted. Functionally, secreted cytokine-like protein. Inhibits cell growth in vitro. In Homo sapiens (Human), this protein is Secretoglobin family 3A member 1 (SCGB3A1).